The following is a 391-amino-acid chain: 3-ketoacyl-CoA thiolase (391 aa).

Catalysis depends on cysteine 95, which acts as the Acyl-thioester intermediate. Residues histidine 347 and cysteine 377 each act as proton acceptor in the active site.

Belongs to the thiolase-like superfamily. Thiolase family. In terms of assembly, heterotetramer of two alpha chains (FadB) and two beta chains (FadA).

It localises to the cytoplasm. The enzyme catalyses an acyl-CoA + acetyl-CoA = a 3-oxoacyl-CoA + CoA. It functions in the pathway lipid metabolism; fatty acid beta-oxidation. In terms of biological role, catalyzes the final step of fatty acid oxidation in which acetyl-CoA is released and the CoA ester of a fatty acid two carbons shorter is formed. The sequence is that of 3-ketoacyl-CoA thiolase from Stutzerimonas stutzeri (strain A1501) (Pseudomonas stutzeri).